The primary structure comprises 352 residues: Homeobox protein Mohawk (352 aa).

Residues 19–54 (GASERERGGRPYSGVLDSPHARPEVGIPDGPPLKDN) form a disordered region. Residues 71 to 132 (VRHKRQALQD…NARRRLKNTV (62 aa)) constitute a DNA-binding region (homeobox; TALE-type). 2 disordered regions span residues 159–189 (VSSD…VHHP) and 245–301 (TRQR…PSKD).

Belongs to the TALE/IRO homeobox family.

It localises to the nucleus. Its function is as follows. May act as a morphogenetic regulator of cell adhesion. The protein is Homeobox protein Mohawk (MKX) of Homo sapiens (Human).